The following is a 341-amino-acid chain: UDP-3-O-acylglucosamine N-acyltransferase (341 aa).

H255 functions as the Proton acceptor in the catalytic mechanism.

It belongs to the transferase hexapeptide repeat family. LpxD subfamily. As to quaternary structure, homotrimer.

It carries out the reaction a UDP-3-O-[(3R)-3-hydroxyacyl]-alpha-D-glucosamine + a (3R)-hydroxyacyl-[ACP] = a UDP-2-N,3-O-bis[(3R)-3-hydroxyacyl]-alpha-D-glucosamine + holo-[ACP] + H(+). Its pathway is bacterial outer membrane biogenesis; LPS lipid A biosynthesis. Functionally, catalyzes the N-acylation of UDP-3-O-acylglucosamine using 3-hydroxyacyl-ACP as the acyl donor. Is involved in the biosynthesis of lipid A, a phosphorylated glycolipid that anchors the lipopolysaccharide to the outer membrane of the cell. The chain is UDP-3-O-acylglucosamine N-acyltransferase from Granulibacter bethesdensis (strain ATCC BAA-1260 / CGDNIH1).